A 160-amino-acid polypeptide reads, in one-letter code: 2-C-methyl-D-erythritol 2,4-cyclodiphosphate synthase (160 aa).

A divalent metal cation contacts are provided by Asp12 and His14. Residues 12 to 14 and 38 to 39 each bind 4-CDP-2-C-methyl-D-erythritol 2-phosphate; these read DVH and HS. His46 contacts a divalent metal cation. Residues 60 to 62, 65 to 69, 136 to 139, Phe143, and Arg146 each bind 4-CDP-2-C-methyl-D-erythritol 2-phosphate; these read DIG, FPDTD, and TTTE.

This sequence belongs to the IspF family. As to quaternary structure, homotrimer. A divalent metal cation is required as a cofactor.

The catalysed reaction is 4-CDP-2-C-methyl-D-erythritol 2-phosphate = 2-C-methyl-D-erythritol 2,4-cyclic diphosphate + CMP. It functions in the pathway isoprenoid biosynthesis; isopentenyl diphosphate biosynthesis via DXP pathway; isopentenyl diphosphate from 1-deoxy-D-xylulose 5-phosphate: step 4/6. Functionally, involved in the biosynthesis of isopentenyl diphosphate (IPP) and dimethylallyl diphosphate (DMAPP), two major building blocks of isoprenoid compounds. Catalyzes the conversion of 4-diphosphocytidyl-2-C-methyl-D-erythritol 2-phosphate (CDP-ME2P) to 2-C-methyl-D-erythritol 2,4-cyclodiphosphate (ME-CPP) with a corresponding release of cytidine 5-monophosphate (CMP). The polypeptide is 2-C-methyl-D-erythritol 2,4-cyclodiphosphate synthase (Acinetobacter baumannii (strain SDF)).